Reading from the N-terminus, the 256-residue chain is Homeobox protein Hox-D13a (256 aa).

The segment at residues glycine 191 to proline 250 is a DNA-binding region (homeobox).

Belongs to the Abd-B homeobox family.

The protein resides in the nucleus. Sequence-specific transcription factor which is part of a developmental regulatory system that provides cells with specific positional identities on the anterior-posterior axis. The polypeptide is Homeobox protein Hox-D13a (hoxd13a) (Danio rerio (Zebrafish)).